A 151-amino-acid polypeptide reads, in one-letter code: Putative pre-16S rRNA nuclease (151 aa).

It belongs to the YqgF nuclease family.

The protein localises to the cytoplasm. Could be a nuclease involved in processing of the 5'-end of pre-16S rRNA. The polypeptide is Putative pre-16S rRNA nuclease (Chlamydia pneumoniae (Chlamydophila pneumoniae)).